We begin with the raw amino-acid sequence, 266 residues long: 4-hydroxy-tetrahydrodipicolinate reductase (266 aa).

NAD(+) is bound by residues 7–12 (GTIGRM), Glu-33, 96–98 (GTT), and 120–123 (APNM). Catalysis depends on His-153, which acts as the Proton donor/acceptor. His-154 is a (S)-2,3,4,5-tetrahydrodipicolinate binding site. Lys-157 (proton donor) is an active-site residue. 163 to 164 (GT) lines the (S)-2,3,4,5-tetrahydrodipicolinate pocket.

The protein belongs to the DapB family.

It is found in the cytoplasm. It carries out the reaction (S)-2,3,4,5-tetrahydrodipicolinate + NAD(+) + H2O = (2S,4S)-4-hydroxy-2,3,4,5-tetrahydrodipicolinate + NADH + H(+). The enzyme catalyses (S)-2,3,4,5-tetrahydrodipicolinate + NADP(+) + H2O = (2S,4S)-4-hydroxy-2,3,4,5-tetrahydrodipicolinate + NADPH + H(+). Its pathway is amino-acid biosynthesis; L-lysine biosynthesis via DAP pathway; (S)-tetrahydrodipicolinate from L-aspartate: step 4/4. In terms of biological role, catalyzes the conversion of 4-hydroxy-tetrahydrodipicolinate (HTPA) to tetrahydrodipicolinate. This Polynucleobacter necessarius subsp. necessarius (strain STIR1) protein is 4-hydroxy-tetrahydrodipicolinate reductase.